Consider the following 332-residue polypeptide: D-lactate dehydrogenase (332 aa).

Residues 155–156 (RI), D175, 206–207 (VP), N212, and 233–235 (FAR) each bind NAD(+). Active-site residues include R235 and E264. H296 functions as the Proton donor in the catalytic mechanism.

It belongs to the D-isomer specific 2-hydroxyacid dehydrogenase family. In terms of assembly, homodimer.

The catalysed reaction is (R)-lactate + NAD(+) = pyruvate + NADH + H(+). The polypeptide is D-lactate dehydrogenase (Lactiplantibacillus pentosus (Lactobacillus pentosus)).